Here is a 152-residue protein sequence, read N- to C-terminus: SUZ RNA-binding domain-containing (152 aa).

Met1 is subject to N-acetylmethionine. A disordered region spans residues 30–152 (TQKESRKSKS…DGSQGFKQRR (123 aa)). Ser37, Ser39, and Ser51 each carry phosphoserine. Residues 42 to 107 (KVPIVIQDDS…ARKRILGSAS (66 aa)) enclose the SUZ domain. Residues 66–81 (PTSNGVVSSPNSTSRP) are compositionally biased toward polar residues. Over residues 89 to 100 (AQREAEYAEARK) the composition is skewed to basic and acidic residues. Phosphoserine is present on residues Ser105 and Ser107. The region spanning 111 to 152 (EQEKPILDRPTRISQPEDSRQPNNVIRQPLGPDGSQGFKQRR) is the SUZ-C domain. Residues 113–130 (EKPILDRPTRISQPEDSR) show a composition bias toward basic and acidic residues.

Belongs to the SZRD1 family.

The polypeptide is SUZ RNA-binding domain-containing (SZRD1) (Homo sapiens (Human)).